Consider the following 94-residue polypeptide: Small ribosomal subunit protein uS19 (94 aa).

It belongs to the universal ribosomal protein uS19 family.

Protein S19 forms a complex with S13 that binds strongly to the 16S ribosomal RNA. The chain is Small ribosomal subunit protein uS19 from Carboxydothermus hydrogenoformans (strain ATCC BAA-161 / DSM 6008 / Z-2901).